The primary structure comprises 191 residues: Inosine triphosphate pyrophosphatase (191 aa).

Position 9-14 (threonine 9–lysine 14) interacts with ITP. Glutamate 39 contributes to the Mg(2+) binding site. Residues lysine 51, aspartate 67–threonine 68, lysine 84, phenylalanine 143–aspartate 146, lysine 166, and histidine 171–arginine 172 contribute to the ITP site.

The protein belongs to the HAM1 NTPase family. Homodimer. It depends on Mg(2+) as a cofactor. The cofactor is Mn(2+).

The protein resides in the cytoplasm. It carries out the reaction ITP + H2O = IMP + diphosphate + H(+). The enzyme catalyses dITP + H2O = dIMP + diphosphate + H(+). It catalyses the reaction XTP + H2O = XMP + diphosphate + H(+). Its function is as follows. Pyrophosphatase that hydrolyzes non-canonical purine nucleotides such as inosine triphosphate (ITP), deoxyinosine triphosphate (dITP) or xanthosine 5'-triphosphate (XTP) to their respective monophosphate derivatives. The enzyme does not distinguish between the deoxy- and ribose forms. Probably excludes non-canonical purines from RNA and DNA precursor pools, thus preventing their incorporation into RNA and DNA and avoiding chromosomal lesions. The chain is Inosine triphosphate pyrophosphatase from Drosophila melanogaster (Fruit fly).